Consider the following 485-residue polypeptide: MLLLELKKTNQTLETIHFIGIGGVGMSGIAEILYNLGYKVQGSDLVENYNTKRLESYGIKIFLGHAEQNITNVSYVVISSAINPKNPEIKEALERKIPIIRRADMLAELMRLKCSVAVSGSHGKTTTTSLVACLFEAAGLCPTVINGGIINNKSTNAYLGSSNYLIAEADESDATFIHIPSTIAIITNIDPEHLDYYRDFETLIGAFRSFITNLPFYGFAVCCIDHKIVRKLVDDITERKIVTYGIDSEDAHIIAFNINTDIASSTFDVKISLPNVLGTTIIEKITIPTPGRHNILNSLAAIAVGIELDFGIKAIKNGFNNFKGVKRRFTKVAEYNNASIIDDYAHHPEEIKATLATAKNIANKQNGKVIAIFQPHRYSRMQYLFDDFMLCFADADILYITDIYAAGENPIEGITGRSLVDKITKRKHHDKANFLAELDDAVGVIIDNAASGDMIIMMGAGNISSFANELEGRLSSRGFSCHTVV.

120-126 (GSHGKTT) is a binding site for ATP.

The protein belongs to the MurCDEF family.

The protein resides in the cytoplasm. It catalyses the reaction UDP-N-acetyl-alpha-D-muramate + L-alanine + ATP = UDP-N-acetyl-alpha-D-muramoyl-L-alanine + ADP + phosphate + H(+). The protein operates within cell wall biogenesis; peptidoglycan biosynthesis. Its function is as follows. Cell wall formation. This is UDP-N-acetylmuramate--L-alanine ligase from Rickettsia conorii (strain ATCC VR-613 / Malish 7).